The primary structure comprises 109 residues: Small ribosomal subunit protein uS17 (109 aa).

This sequence belongs to the universal ribosomal protein uS17 family. Part of the 30S ribosomal subunit.

One of the primary rRNA binding proteins, it binds specifically to the 5'-end of 16S ribosomal RNA. This Halobacterium salinarum (strain ATCC 29341 / DSM 671 / R1) protein is Small ribosomal subunit protein uS17.